A 239-amino-acid chain; its full sequence is SH3 domain-binding glutamic acid-rich protein (239 aa).

Residues 124 to 130 (NGIPLPP) carry the SH3-binding motif. The disordered stretch occupies residues 159 to 239 (GLAPPPDSKG…GEEPGEDEDS (81 aa)). Basic and acidic residues predominate over residues 167–185 (KGSEKAEEGGETEAQKEGS). Over residues 198 to 239 (NEEEGETATEETEEIAMEGAEGEAEEEEETAEGEEPGEDEDS) the composition is skewed to acidic residues.

It belongs to the SH3BGR family. In terms of tissue distribution, expressed in heart and skeletal muscle.

This chain is SH3 domain-binding glutamic acid-rich protein (SH3BGR), found in Homo sapiens (Human).